The chain runs to 467 residues: Gamma-aminobutyric acid receptor subunit gamma-2 (467 aa).

Residues 1 to 39 (MSSPNIWSTGSSVYSTPVFSQKMTVWILLLLSLYPGFTS) form the signal peptide. Over 40–275 (QKSDDDYEDY…FDLSRRMGYF (236 aa)) the chain is Extracellular. Residues asparagine 52 and asparagine 129 are each glycosylated (N-linked (GlcNAc...) asparagine). Cysteines 190 and 204 form a disulfide. Residue asparagine 247 is glycosylated (N-linked (GlcNAc...) asparagine). Residues 276–296 (TIQTYIPCTLIVVLSWVSFWI) form a helical membrane-spanning segment. The Cytoplasmic segment spans residues 297–302 (NKDAVP). Residues 303 to 322 (ARTSLGITTVLTMTTLSTIA) form a helical membrane-spanning segment. The Extracellular portion of the chain corresponds to 323-334 (RKSLPKVSYVTA). Residues 335 to 359 (MDLFVSVCFIFVFSALVEYGTLHYF) form a helical membrane-spanning segment. Residues 360–443 (VSNRKPSKDK…IHIRIAKMDS (84 aa)) lie on the Cytoplasmic side of the membrane. Residues 425-442 (RTGAWRHGRIHIRIAKMD) are interaction with GABARAP. Residues 444–464 (YARIFFPTAFCLFNLVYWVSY) traverse the membrane as a helical segment. At 465 to 467 (LYL) the chain is on the extracellular side.

The protein belongs to the ligand-gated ion channel (TC 1.A.9) family. Gamma-aminobutyric acid receptor (TC 1.A.9.5) subfamily. GABRG2 sub-subfamily. In terms of assembly, heteropentamer, formed by a combination of alpha (GABRA1-6), beta (GABRB1-3), gamma (GABRG1-3), delta (GABRD), epsilon (GABRE), rho (GABRR1-3), pi (GABRP) and theta (GABRQ) chains, each subunit exhibiting distinct physiological and pharmacological properties. Interacts with GABARAP. Interacts with KIF21B. Identified in a complex of 720 kDa composed of LHFPL4, NLGN2, GABRA1, GABRB2, GABRG2 and GABRB3. Interacts with LHFPL4. Interacts with SHISA7; interaction leads to the regulation of GABA(A) receptor trafficking, channel deactivation kinetics and pharmacology. Palmitoylated by ZDHHC3/GODZ; required for the accumulation of GABA(A) receptors at the postsynaptic membrane of inhibitory GABAergic synapses. In terms of processing, glycosylated.

The protein localises to the postsynaptic cell membrane. The protein resides in the cell membrane. It is found in the cell projection. It localises to the dendrite. Its subcellular location is the cytoplasmic vesicle membrane. It catalyses the reaction chloride(in) = chloride(out). Its activity is regulated as follows. Allosterically activated by benzodiazepines. Activated by pentobarbital. Inhibited by the antagonist bicuculline. Inhibited by zinc ions. Potentiated by histamine. Its function is as follows. Gamma subunit of the heteropentameric ligand-gated chloride channel gated by gamma-aminobutyric acid (GABA), a major inhibitory neurotransmitter in the brain. GABA-gated chloride channels, also named GABA(A) receptors (GABAAR), consist of five subunits arranged around a central pore and contain GABA active binding site(s) located at the alpha and beta subunit interface(s). When activated by GABA, GABAARs selectively allow the flow of chloride anions across the cell membrane down their electrochemical gradient. Gamma-2/GABRG2-containing GABAARs are found at both synaptic and extrasynaptic sites. Chloride influx into the postsynaptic neuron following GABAAR opening decreases the neuron ability to generate a new action potential, thereby reducing nerve transmission. GABAARs containing alpha-1 and beta-2 or -3 subunits exhibit synaptogenic activity; the gamma-2 subunit being necessary but not sufficient to induce rapid synaptic contacts formation. Extrasynaptic gamma-2-containing receptors contribute to the tonic GABAergic inhibition. GABAARs function also as histamine receptor where histamine binds at the interface of two neighboring beta subunits and potentiates GABA response in a gamma-2 subunit-controlled manner. In Pongo abelii (Sumatran orangutan), this protein is Gamma-aminobutyric acid receptor subunit gamma-2 (GABRG2).